A 105-amino-acid chain; its full sequence is Large ribosomal subunit protein eL36 (105 aa).

At lysine 62 the chain carries N6-acetyllysine.

The protein belongs to the eukaryotic ribosomal protein eL36 family. In terms of assembly, component of the large ribosomal subunit.

It is found in the cytoplasm. Its subcellular location is the cytosol. Functionally, component of the large ribosomal subunit. The ribosome is a large ribonucleoprotein complex responsible for the synthesis of proteins in the cell. The sequence is that of Large ribosomal subunit protein eL36 (RPL36) from Bos taurus (Bovine).